The primary structure comprises 184 residues: Photosystem I assembly protein Ycf4 (184 aa).

A run of 2 helical transmembrane segments spans residues 22–42 (FCWA…GTSS) and 57–77 (IIFF…LFIS).

The protein belongs to the Ycf4 family.

Its subcellular location is the plastid. It is found in the chloroplast thylakoid membrane. In terms of biological role, seems to be required for the assembly of the photosystem I complex. This chain is Photosystem I assembly protein Ycf4, found in Capsella bursa-pastoris (Shepherd's purse).